The following is a 306-amino-acid chain: Pantothenate kinase (306 aa).

ATP is bound at residue 91-98 (GSVAVGKS).

This sequence belongs to the prokaryotic pantothenate kinase family.

The protein resides in the cytoplasm. The catalysed reaction is (R)-pantothenate + ATP = (R)-4'-phosphopantothenate + ADP + H(+). It participates in cofactor biosynthesis; coenzyme A biosynthesis; CoA from (R)-pantothenate: step 1/5. In Streptococcus pneumoniae (strain JJA), this protein is Pantothenate kinase.